Consider the following 175-residue polypeptide: Interleukin-10 (175 aa).

The first 21 residues, 1–21 (MQTCCQALLLLLAACTLPAHC), serve as a signal peptide directing secretion. Disulfide bonds link C26–C123 and C77–C129.

Belongs to the IL-10 family. Homodimer. Interacts with IL10RA and IL10RB. As to expression, expressed predominantly in bursa of Fabricius and cecal tonsils with low levels in thymus, liver and lung.

The protein resides in the secreted. Major immune regulatory cytokine that acts on many cells of the immune system where it has profound anti-inflammatory functions, limiting excessive tissue disruption caused by inflammation. Mechanistically, IL10 binds to its heterotetrameric receptor comprising IL10RA and IL10RB leading to JAK1 and STAT2-mediated phosphorylation of STAT3. In turn, STAT3 translocates to the nucleus where it drives expression of anti-inflammatory mediators. Targets antigen-presenting cells (APCs) such as macrophages and monocytes and inhibits their release of pro-inflammatory cytokines including granulocyte-macrophage colony-stimulating factor /GM-CSF, granulocyte colony-stimulating factor/G-CSF, IL-1 alpha, IL-1 beta, IL-6, IL-8 and TNF-alpha. Also interferes with antigen presentation by reducing the expression of MHC-class II and co-stimulatory molecules, thereby inhibiting their ability to induce T cell activation. In addition, controls the inflammatory response of macrophages by reprogramming essential metabolic pathways including mTOR signaling. The protein is Interleukin-10 of Gallus gallus (Chicken).